A 53-amino-acid chain; its full sequence is Kunitz-type trypsin inhibitor alpha chain (53 aa).

The tract at residues 33–53 is disordered; it reads GWGLPRRTGDESCPLNVKAVR.

This sequence belongs to the protease inhibitor I3 (leguminous Kunitz-type inhibitor) family. In terms of assembly, heterodimer of an alpha and a beta chain linked by a disulfide bond.

Inhibits trypsin with a Ki of 0.25 uM. Inhibits the trypsin-like proteases in midguts of larval H.armigera, S.exigua, and P.rapae. The polypeptide is Kunitz-type trypsin inhibitor alpha chain (Albizia kalkora (Kalkora mimosa)).